The chain runs to 199 residues: Shikimate kinase (199 aa).

34–39 lines the ATP pocket; it reads GAGKTA. Mg(2+) is bound at residue threonine 38. The substrate site is built by aspartate 56, arginine 80, and glycine 102. Arginine 140 contacts ATP. Arginine 159 is a binding site for substrate.

The protein belongs to the shikimate kinase family. As to quaternary structure, monomer. The cofactor is Mg(2+).

The protein resides in the cytoplasm. The catalysed reaction is shikimate + ATP = 3-phosphoshikimate + ADP + H(+). It participates in metabolic intermediate biosynthesis; chorismate biosynthesis; chorismate from D-erythrose 4-phosphate and phosphoenolpyruvate: step 5/7. Functionally, catalyzes the specific phosphorylation of the 3-hydroxyl group of shikimic acid using ATP as a cosubstrate. The sequence is that of Shikimate kinase from Cereibacter sphaeroides (strain ATCC 17023 / DSM 158 / JCM 6121 / CCUG 31486 / LMG 2827 / NBRC 12203 / NCIMB 8253 / ATH 2.4.1.) (Rhodobacter sphaeroides).